The following is a 3392-amino-acid chain: Genome polyprotein (3392 aa).

The tract at residues 1 to 15 is interaction with host EXOC1; that stretch reads MNNQRKKTGRPSFNM. Over 1 to 101 the chain is Cytoplasmic; sequence MNNQRKKTGR…LNIMNRRKRS (101 aa). The hydrophobic; homodimerization of capsid protein C stretch occupies residues 37 to 72; sequence LLSGQGPMKLVMAFIAFLRFLAIPPTAGILARWGSF. A propeptide spans 101 to 114 (ER anchor for the capsid protein C, removed in mature form by serine protease NS3); that stretch reads SVTMLLMLLPTALA. Residues 102–119 form a helical membrane-spanning segment; that stretch reads VTMLLMLLPTALAFHLTT. At 120-242 the chain is on the extracellular side; that stretch reads RGGEPHMIVS…QIQKVETWAL (123 aa). Asn-183 carries N-linked (GlcNAc...) asparagine; by host glycosylation. The helical transmembrane segment at 243-260 threads the bilayer; that stretch reads RHPGFTVIALFLAHAIGT. Residue Ser-261 is a topological domain, cytoplasmic. A helical membrane pass occupies residues 262 to 280; that stretch reads ITQKGIIFILLMLVTPSMA. The Extracellular segment spans residues 281–725; the sequence is MRCVGIGNRD…IHQIFGTAYG (445 aa). 4 disulfides stabilise this stretch: Cys-283-Cys-310, Cys-340-Cys-401, Cys-354-Cys-385, and Cys-372-Cys-396. An N-linked (GlcNAc...) asparagine; by host glycan is attached at Asn-347. The tract at residues 378–391 is fusion peptide; it reads DRGWGNGCGLFGKG. Asn-433 carries N-linked (GlcNAc...) asparagine; by host glycosylation. 2 cysteine pairs are disulfide-bonded: Cys-465/Cys-565 and Cys-582/Cys-613. Residues 726-746 traverse the membrane as a helical segment; the sequence is VLFSGVSWTMKIGIGILLTWL. Residues 747–752 are Cytoplasmic-facing; that stretch reads GLNSRS. A helical membrane pass occupies residues 753–773; that stretch reads TSLSMTCIAVGMVTLYLGVMV. Topologically, residues 774–1195 are extracellular; sequence QADSGCVINW…MVGANASDKM (422 aa). 6 disulfides stabilise this stretch: Cys-779–Cys-790, Cys-830–Cys-918, Cys-954–Cys-998, Cys-1055–Cys-1104, Cys-1066–Cys-1088, and Cys-1087–Cys-1091. 2 N-linked (GlcNAc...) asparagine; by host glycosylation sites follow: Asn-905 and Asn-982. An N-linked (GlcNAc...) asparagine; by host glycan is attached at Asn-1190. A helical membrane pass occupies residues 1196–1220; that stretch reads GMGTTYLALMATFRMRPMFAVGLLF. At 1221–1226 the chain is on the cytoplasmic side; sequence RRLTSR. Residues 1227-1245 form a helical membrane-spanning segment; sequence EVLLLTVGLSLVASVELPN. Residues 1246 to 1269 are Lumenal-facing; the sequence is SLEELGDGLAMGIMMLKLLTDFQS. The chain crosses the membrane as a helical span at residues 1270–1290; the sequence is HQLWATLLSLTFVKTTFSLHY. Ala-1291 is a topological domain (cytoplasmic). A helical membrane pass occupies residues 1292 to 1310; it reads WKTMAMILSIVSLFPLCLS. Residues 1311–1315 lie on the Lumenal side of the membrane; that stretch reads TTSQK. A helical membrane pass occupies residues 1316 to 1336; sequence TTWLPVLLGSLGCKPLTMFLI. The Cytoplasmic portion of the chain corresponds to 1337–1351; the sequence is TENKIWGRKSWPLNE. Residues 1352–1370 traverse the membrane as a helical segment; it reads GIMAVGIVSILLSSLLKND. Residue Val-1371 is a topological domain, lumenal. The helical transmembrane segment at 1372-1391 threads the bilayer; that stretch reads PLAGPLIAGGMLIACYVISG. Residues 1392-1447 lie on the Cytoplasmic side of the membrane; sequence SSADLSLEKAAEVSWEEEAEHSGASHNILVEVQDDGTMKIKDEERDDTLTILLKAT. An interacts with and activates NS3 protease region spans residues 1398–1437; sequence LEKAAEVSWEEEAEHSGASHNILVEVQDDGTMKIKDEERD. An intramembrane region (helical) is located at residues 1448 to 1468; it reads LLAISGVYPMSIPATLFVWYF. The Cytoplasmic portion of the chain corresponds to 1469–2148; that stretch reads WQKKKQRSGV…MEELPDTIET (680 aa). The Peptidase S7 domain maps to 1476–1653; the sequence is SGVLWDTPSP…KASQEGPLPE (178 aa). Active-site charge relay system; for serine protease NS3 activity residues include His-1526, Asp-1550, and Ser-1610. Positions 1656 to 1812 constitute a Helicase ATP-binding domain; it reads DEVFRKRNLT…QSNAVIQDEE (157 aa). Residues 1660-1663 are important for RNA-binding; it reads RKRN. 1669 to 1676 lines the ATP pocket; that stretch reads LHPGSGKT. Positions 1760–1763 match the DEAH box motif; sequence DEAH. Positions 1822-1988 constitute a Helicase C-terminal domain; sequence SGYDWITDFP…GIIPALFEPE (167 aa). Lys-1864 is modified (N6-acetyllysine; by host). A helical membrane pass occupies residues 2149 to 2169; the sequence is LMLLALIAVLTGGVTLFFLSG. Over 2170-2171 the chain is Lumenal; the sequence is RG. The segment at residues 2172 to 2192 is an intramembrane region (helical); that stretch reads LGKTSIGLLCVIASSALLWMA. Position 2193 (Ser-2193) is a topological domain, lumenal. A helical transmembrane segment spans residues 2194–2214; that stretch reads VEPHWIAASIILEFFLMVLLI. At 2215–2229 the chain is on the cytoplasmic side; the sequence is PEPDRQRTPQDNQLA. A helical transmembrane segment spans residues 2230-2244; that stretch reads YVVIGLLFMILTAAA. Residues 2245-2276 lie on the Lumenal side of the membrane; it reads NEMGLLETTKKDLGIGHAAAENHHHAAMLDVD. Positions 2277-2297 form an intramembrane region, helical; it reads LHPASAWTLYAVATTIITPMM. Residues 2298–2349 are Lumenal-facing; that stretch reads RHTIENTTANISLTAIANQAAILMGLDKGWPISKMDIGVPLLALGCYSQVNP. N-linked (GlcNAc...) asparagine; by host glycosylation is found at Asn-2303 and Asn-2307. Residues 2350 to 2370 form a helical membrane-spanning segment; the sequence is LTLTAAVFMLVAHYAIIGPGL. At 2371 to 2415 the chain is on the cytoplasmic side; the sequence is QAKATREAQKRTAAGIMKNPTVDGIVAIDLDPVVYDAKFEKQLGQ. Residues 2416-2436 traverse the membrane as a helical segment; it reads IMLLILCTSQILLMRTTWALC. Residues 2437 to 2461 are Lumenal-facing; the sequence is ESITLATGPLTTLWEGSPGKFWNTT. The N-linked (GlcNAc...) asparagine; by host glycan is linked to Asn-2459. The chain crosses the membrane as a helical span at residues 2462 to 2482; the sequence is IAVSMANIFRGSYLAGAGLAF. Residues 2483-3392 lie on the Cytoplasmic side of the membrane; the sequence is SLMKSLGGGR…NESDPEGALW (910 aa). The 262-residue stretch at 2495–2756 folds into the mRNA cap 0-1 NS5-type MT domain; that stretch reads TGAQGETLGE…DVDLGAGTRH (262 aa). An S-adenosyl-L-methionine-binding site is contributed by Ser-2549. Position 2549 is a phosphoserine (Ser-2549). Residue Lys-2554 is the For 2'-O-MTase activity of the active site. An SUMO-interacting motif motif is present at residues 2570 to 2573; that stretch reads VIDL. Positions 2579, 2580, 2597, 2598, 2624, and 2625 each coordinate S-adenosyl-L-methionine. Residue Asp-2639 is the For 2'-O-MTase activity of the active site. Ile-2640 lines the S-adenosyl-L-methionine pocket. Active-site for 2'-O-MTase activity residues include Lys-2673 and Glu-2709. Residue Tyr-2711 participates in S-adenosyl-L-methionine binding. Positions 2930, 2934, 2939, and 2942 each coordinate Zn(2+). Positions 3020–3169 constitute a RdRp catalytic domain; that stretch reads GNMYADDTAG…KPIDDRFATA (150 aa). Positions 3204, 3220, and 3339 each coordinate Zn(2+).

It in the N-terminal section; belongs to the class I-like SAM-binding methyltransferase superfamily. mRNA cap 0-1 NS5-type methyltransferase family. Homodimer. Interacts (via N-terminus) with host EXOC1 (via C-terminus); this interaction results in EXOC1 degradation through the proteasome degradation pathway. In terms of assembly, forms heterodimers with envelope protein E in the endoplasmic reticulum and Golgi. As to quaternary structure, homodimer; in the endoplasmic reticulum and Golgi. Interacts with protein prM. Interacts with non-structural protein 1. Homodimer; Homohexamer when secreted. Interacts with envelope protein E. In terms of assembly, interacts (via N-terminus) with serine protease NS3. As to quaternary structure, forms a heterodimer with serine protease NS3. May form homooligomers. Forms a heterodimer with NS2B. Interacts with NS4B. Interacts with unphosphorylated RNA-directed RNA polymerase NS5; this interaction stimulates RNA-directed RNA polymerase NS5 guanylyltransferase activity. Interacts with host SHFL. In terms of assembly, interacts with host MAVS; this interaction inhibits the synthesis of IFN-beta. Interacts with host SHFL. Interacts with host AUP1; the interaction occurs in the presence of Dengue virus NS4B and induces lipophagy which facilitates production of virus progeny particles. As to quaternary structure, interacts with serine protease NS3. Homodimer. Interacts with host STAT2; this interaction inhibits the phosphorylation of the latter, and, when all viral proteins are present (polyprotein), targets STAT2 for degradation. Interacts with serine protease NS3. In terms of processing, sumoylation of RNA-directed RNA polymerase NS5 increases NS5 protein stability allowing proper viral RNA replication. Post-translationally, specific enzymatic cleavages in vivo yield mature proteins. Cleavages in the lumen of endoplasmic reticulum are performed by host signal peptidase, whereas cleavages in the cytoplasmic side are performed by the Serine protease NS3. Signal cleavage at the 2K-4B site requires a prior NS3 protease-mediated cleavage at the 4A-2K site. Cleaved in post-Golgi vesicles by a host furin, releasing the mature small envelope protein M, and peptide pr. This cleavage is incomplete as up to 30% of viral particles still carry uncleaved prM. In terms of processing, N-glycosylated. The excreted form is glycosylated and this is required for efficient secretion of the protein from infected cells. Post-translationally, acetylated by host KAT5. Acetylation modulates NS3 RNA-binding and unwinding activities and plays an important positive role for viral replication. Phosphorylated on serines residues. This phosphorylation may trigger NS5 nuclear localization. In terms of processing, N-glycosylated.

Its subcellular location is the virion. It is found in the host nucleus. The protein resides in the host cytoplasm. The protein localises to the host perinuclear region. It localises to the secreted. Its subcellular location is the virion membrane. It is found in the host endoplasmic reticulum membrane. The protein resides in the host mitochondrion. It carries out the reaction Selective hydrolysis of -Xaa-Xaa-|-Yaa- bonds in which each of the Xaa can be either Arg or Lys and Yaa can be either Ser or Ala.. The catalysed reaction is RNA(n) + a ribonucleoside 5'-triphosphate = RNA(n+1) + diphosphate. The enzyme catalyses a ribonucleoside 5'-triphosphate + H2O = a ribonucleoside 5'-diphosphate + phosphate + H(+). It catalyses the reaction ATP + H2O = ADP + phosphate + H(+). It carries out the reaction a 5'-end (5'-triphosphoguanosine)-ribonucleoside in mRNA + S-adenosyl-L-methionine = a 5'-end (N(7)-methyl 5'-triphosphoguanosine)-ribonucleoside in mRNA + S-adenosyl-L-homocysteine. The catalysed reaction is a 5'-end (N(7)-methyl 5'-triphosphoguanosine)-ribonucleoside in mRNA + S-adenosyl-L-methionine = a 5'-end (N(7)-methyl 5'-triphosphoguanosine)-(2'-O-methyl-ribonucleoside) in mRNA + S-adenosyl-L-homocysteine + H(+). Its function is as follows. Plays a role in virus budding by binding to the cell membrane and gathering the viral RNA into a nucleocapsid that forms the core of a mature virus particle. During virus entry, may induce genome penetration into the host cytoplasm after hemifusion induced by the surface proteins. Can migrate to the cell nucleus where it modulates host functions. Overcomes the anti-viral effects of host EXOC1 by sequestering and degrading the latter through the proteasome degradation pathway. Functionally, inhibits RNA silencing by interfering with host Dicer. Prevents premature fusion activity of envelope proteins in trans-Golgi by binding to envelope protein E at pH6.0. After virion release in extracellular space, gets dissociated from E dimers. In terms of biological role, acts as a chaperone for envelope protein E during intracellular virion assembly by masking and inactivating envelope protein E fusion peptide. prM is the only viral peptide matured by host furin in the trans-Golgi network probably to avoid catastrophic activation of the viral fusion activity in acidic Golgi compartment prior to virion release. prM-E cleavage is inefficient, and many virions are only partially matured. These uncleaved prM would play a role in immune evasion. Its function is as follows. May play a role in virus budding. Exerts cytotoxic effects by activating a mitochondrial apoptotic pathway through M extodomain. May display a viroporin activity. Functionally, binds to host cell surface receptor and mediates fusion between viral and cellular membranes. Envelope protein is synthesized in the endoplasmic reticulum in the form of heterodimer with protein prM. They play a role in virion budding in the ER, and the newly formed immature particle is covered with 60 spikes composed of heterodimer between precursor prM and envelope protein E. The virion is transported to the Golgi apparatus where the low pH causes dissociation of PrM-E heterodimers and formation of E homodimers. prM-E cleavage is ineficient, and many virions are only partially matured. These uncleaved prM would play a role in immune evasion. Involved in immune evasion, pathogenesis and viral replication. Once cleaved off the polyprotein, is targeted to three destinations: the viral replication cycle, the plasma membrane and the extracellular compartment. Essential for viral replication. Required for formation of the replication complex and recruitment of other non-structural proteins to the ER-derived membrane structures. Excreted as a hexameric lipoparticle that plays a role against host immune response. Antagonizing the complement function. Binds to the host macrophages and dendritic cells. Inhibits signal transduction originating from Toll-like receptor 3 (TLR3). In terms of biological role, disrupts the host endothelial glycocalyx layer of host pulmonary microvascular endothelial cells, inducing degradation of sialic acid and shedding of heparan sulfate proteoglycans. NS1 induces expression of sialidases, heparanase, and activates cathepsin L, which activates heparanase via enzymatic cleavage. These effects are probably linked to the endothelial hyperpermeability observed in severe dengue disease. Its function is as follows. Component of the viral RNA replication complex that functions in virion assembly and antagonizes the host immune response. Functionally, required cofactor for the serine protease function of NS3. May have membrane-destabilizing activity and form viroporins. Displays three enzymatic activities: serine protease, NTPase and RNA helicase. NS3 serine protease, in association with NS2B, performs its autocleavage and cleaves the polyprotein at dibasic sites in the cytoplasm: C-prM, NS2A-NS2B, NS2B-NS3, NS3-NS4A, NS4A-2K and NS4B-NS5. NS3 RNA helicase binds RNA and unwinds dsRNA in the 3' to 5' direction. In terms of biological role, regulates the ATPase activity of the NS3 helicase activity. NS4A allows NS3 helicase to conserve energy during unwinding. Plays a role in the inhibition of the host innate immune response. Interacts with host MAVS and thereby prevents the interaction between RIGI and MAVS. In turn, IFN-beta production is impaired. Interacts with host AUP1 which mediates induction of lipophagy in host cells and facilitates production of virus progeny particles. Its function is as follows. Functions as a signal peptide for NS4B and is required for the interferon antagonism activity of the latter. Functionally, induces the formation of ER-derived membrane vesicles where the viral replication takes place. Inhibits interferon (IFN)-induced host STAT1 phosphorylation and nuclear translocation, thereby preventing the establishment of a cellular antiviral state by blocking the IFN-alpha/beta pathway. Replicates the viral (+) and (-) RNA genome, and performs the capping of genomes in the cytoplasm. NS5 methylates viral RNA cap at guanine N-7 and ribose 2'-O positions. Besides its role in RNA genome replication, also prevents the establishment of cellular antiviral state by blocking the interferon-alpha/beta (IFN-alpha/beta) signaling pathway. Inhibits host TYK2 and STAT2 phosphorylation, thereby preventing activation of JAK-STAT signaling pathway. In Aedes aegypti (Yellowfever mosquito), this protein is Genome polyprotein.